Here is a 213-residue protein sequence, read N- to C-terminus: Pyridoxine/pyridoxamine 5'-phosphate oxidase (213 aa).

Substrate is bound by residues 8–11 (RQEY) and Lys66. FMN is bound by residues 61-66 (RTVLLK), 76-77 (YT), Arg82, Lys83, and Gln105. Residues Tyr123, Arg127, and Ser131 each coordinate substrate. FMN contacts are provided by residues 140–141 (QS) and Trp185. Position 191–193 (191–193 (RLH)) interacts with substrate. Residue Arg195 coordinates FMN.

It belongs to the pyridoxamine 5'-phosphate oxidase family. As to quaternary structure, homodimer. Requires FMN as cofactor.

The enzyme catalyses pyridoxamine 5'-phosphate + O2 + H2O = pyridoxal 5'-phosphate + H2O2 + NH4(+). The catalysed reaction is pyridoxine 5'-phosphate + O2 = pyridoxal 5'-phosphate + H2O2. It functions in the pathway cofactor metabolism; pyridoxal 5'-phosphate salvage; pyridoxal 5'-phosphate from pyridoxamine 5'-phosphate: step 1/1. Its pathway is cofactor metabolism; pyridoxal 5'-phosphate salvage; pyridoxal 5'-phosphate from pyridoxine 5'-phosphate: step 1/1. Functionally, catalyzes the oxidation of either pyridoxine 5'-phosphate (PNP) or pyridoxamine 5'-phosphate (PMP) into pyridoxal 5'-phosphate (PLP). This is Pyridoxine/pyridoxamine 5'-phosphate oxidase from Bacteroides thetaiotaomicron (strain ATCC 29148 / DSM 2079 / JCM 5827 / CCUG 10774 / NCTC 10582 / VPI-5482 / E50).